Reading from the N-terminus, the 1335-residue chain is Phospholipid-transporting ATPase IK (1335 aa).

Over 1-74 the chain is Cytoplasmic; the sequence is MDGVHLGENL…LYEQFHRMSN (74 aa). The helical transmembrane segment at 75–95 threads the bilayer; the sequence is LYFLFIIILQGIPEISTLPWF. Topologically, residues 96–295 are exoplasmic loop; that stretch reads TLFAPLVCLF…LDLMMNKLVA (200 aa). A helical transmembrane segment spans residues 296-316; it reads LIFLSLVIASLLLTVGFTFMV. Over 317–339 the chain is Cytoplasmic; it reads KQFKAKHYYMSPTHGRSDAMESF. Residues 340–360 traverse the membrane as a helical segment; that stretch reads FIFWGFLILLSVMVPMAMFII. At 361-917 the chain is on the exoplasmic loop side; the sequence is AEFIYLGNSI…YMRVCKFLRY (557 aa). The active-site 4-aspartylphosphate intermediate is Asp407. Residues Asp407, Lys408, Thr409, Glu504, Phe545, Lys568, Arg601, Thr681, Gly682, Asp683, Arg831, and Lys837 each coordinate ATP. Position 407 (Asp407) interacts with Mg(2+). Thr409 contributes to the Mg(2+) binding site. Mg(2+) is bound at residue Asp857. ATP is bound by residues Asn860 and Asp861. Mg(2+) is bound at residue Asp861. Residues 918–938 traverse the membrane as a helical segment; that stretch reads FFYKTVASMMAQIWFSLVNGF. At 939-946 the chain is on the cytoplasmic side; the sequence is SAQPLYEG. A helical transmembrane segment spans residues 947 to 967; it reads WFLALFNLLYSTLPVLYIGLF. The Exoplasmic loop portion of the chain corresponds to 968–995; it reads EQDVTAEKSLKMPELYMAGQKGELFNYS. The chain crosses the membrane as a helical span at residues 996–1016; the sequence is IFMQAITHGTITSMINFFVTV. The Cytoplasmic segment spans residues 1017 to 1033; it reads MVSSDMSKAGSSHDYQS. The helical transmembrane segment at 1034 to 1054 threads the bilayer; the sequence is LGVLVAISSLLSVTLEVMLVV. Residue Lys1055 is a topological domain, exoplasmic loop. The helical transmembrane segment at 1056–1076 threads the bilayer; that stretch reads YWTLLFVGAVVLSLSSYVLMT. Over 1077–1104 the chain is Cytoplasmic; that stretch reads SLTQSLWMYRISPKTFPFLFADYNVLFE. The chain crosses the membrane as a helical span at residues 1105 to 1125; the sequence is PCSLLLIVLNVALNVLPMLAL. Residues 1126 to 1335 lie on the Exoplasmic loop side of the membrane; that stretch reads RTIHRTVLKQ…SQLEVPRKQS (210 aa). 3 disordered regions span residues 1192–1215, 1236–1280, and 1314–1335; these read VDDS…PLQN, FGKG…GKLL, and SPLW…RKQS. Polar residues-rich tracts occupy residues 1246 to 1255 and 1266 to 1276; these read PNTSSQTMEK and QKLPTTTSATS.

This sequence belongs to the cation transport ATPase (P-type) (TC 3.A.3) family. Type IV subfamily. Requires Mg(2+) as cofactor. In terms of tissue distribution, expressed in testis, specifically in spermatids within seminiferous tubules (at protein level).

It localises to the cytoplasmic vesicle. The protein resides in the secretory vesicle. Its subcellular location is the acrosome membrane. It is found in the endoplasmic reticulum membrane. It carries out the reaction ATP + H2O + phospholipidSide 1 = ADP + phosphate + phospholipidSide 2.. The enzyme catalyses a 1,2-diacyl-sn-glycero-3-phospho-L-serine(out) + ATP + H2O = a 1,2-diacyl-sn-glycero-3-phospho-L-serine(in) + ADP + phosphate + H(+). Its function is as follows. P4-ATPase flippase which catalyzes the hydrolysis of ATP coupled to the transport of aminophospholipids from the outer to the inner leaflet of various membranes and ensures the maintenance of asymmetric distribution of phospholipids. Phospholipid translocation also seems to be implicated in vesicle formation and in uptake of lipid signaling molecules. May be responsible for the maintenance of asymmetric distribution of phosphatidylserine (PS) in spermatozoa membranes. Involved in acrosome reactions and binding of spermatozoa to zona pellucida. This chain is Phospholipid-transporting ATPase IK, found in Mus musculus (Mouse).